The following is a 186-amino-acid chain: Imidazoleglycerol-phosphate dehydratase (186 aa).

The protein belongs to the imidazoleglycerol-phosphate dehydratase family.

It localises to the cytoplasm. It catalyses the reaction D-erythro-1-(imidazol-4-yl)glycerol 3-phosphate = 3-(imidazol-4-yl)-2-oxopropyl phosphate + H2O. It participates in amino-acid biosynthesis; L-histidine biosynthesis; L-histidine from 5-phospho-alpha-D-ribose 1-diphosphate: step 6/9. The protein is Imidazoleglycerol-phosphate dehydratase of Pyrobaculum aerophilum (strain ATCC 51768 / DSM 7523 / JCM 9630 / CIP 104966 / NBRC 100827 / IM2).